Here is a 617-residue protein sequence, read N- to C-terminus: uncharacterized protein (617 aa).

Composition is skewed to low complexity over residues 1-16 (MSKCATPTPSTSSNSS) and 36-45 (STTSSNGSNS). The tract at residues 1 to 49 (MSKCATPTPSTSSNSSDEAKRSPQPMSRGFPQRNMSTTSSNGSNSPRHR) is disordered. The next 3 helical transmembrane spans lie at 219-239 (LMIGAAGGVGGVLIGLTGGLA), 262-282 (TAGAAVLGTTMGVAGAGFTGY), and 427-447 (PITLIGFSLGARVIFHCLLTM).

This sequence belongs to the TMCO4 family.

It localises to the membrane. This is an uncharacterized protein from Caenorhabditis elegans.